The primary structure comprises 243 residues: Complement C1q tumor necrosis factor-related protein 5 (243 aa).

A signal peptide spans 1 to 15; that stretch reads MRPLLVLLLLGLAAG. The disordered stretch occupies residues 15 to 125; sequence GSPPLDDNKI…PPPSDAPLPF (111 aa). In terms of domain architecture, Collagen-like spans 30–95; that stretch reads GHPGLPGTPG…AGPAGPTGPA (66 aa). Residues 83-96 are compositionally biased toward low complexity; sequence RGEAGPAGPTGPAG. One can recognise a C1q domain in the interval 99-238; sequence SVPPRSAFSA…GFLVYSDWHS (140 aa).

As to quaternary structure, may interact with ERFE. Homotrimer (via collagen-like domain). May form higher order oligomers by supercoiling of the trimers.

It is found in the secreted. The sequence is that of Complement C1q tumor necrosis factor-related protein 5 (C1QTNF5) from Homo sapiens (Human).